The sequence spans 315 residues: Methionyl-tRNA formyltransferase (315 aa).

(6S)-5,6,7,8-tetrahydrofolate is bound at residue S113 to P116.

The protein belongs to the Fmt family.

It catalyses the reaction L-methionyl-tRNA(fMet) + (6R)-10-formyltetrahydrofolate = N-formyl-L-methionyl-tRNA(fMet) + (6S)-5,6,7,8-tetrahydrofolate + H(+). Its function is as follows. Attaches a formyl group to the free amino group of methionyl-tRNA(fMet). The formyl group appears to play a dual role in the initiator identity of N-formylmethionyl-tRNA by promoting its recognition by IF2 and preventing the misappropriation of this tRNA by the elongation apparatus. In Vibrio vulnificus (strain CMCP6), this protein is Methionyl-tRNA formyltransferase.